The chain runs to 242 residues: Putative prolyl 4-hydroxylase (242 aa).

The Fe2OG dioxygenase domain occupies 128–238 (NAEDLQVVRY…KWIANLWFRE (111 aa)).

This sequence belongs to the P4HA family. Requires Fe cation as cofactor. L-ascorbate is required as a cofactor.

The protein localises to the virion. The catalysed reaction is L-prolyl-[collagen] + 2-oxoglutarate + O2 = trans-4-hydroxy-L-prolyl-[collagen] + succinate + CO2. Its function is as follows. May catalyze the post-translational formation of 4-hydroxyproline in -Xaa-Pro-Gly- sequences in the 6 collagen-like proteins of Mimivirus. This is Putative prolyl 4-hydroxylase from Acanthamoeba polyphaga mimivirus (APMV).